We begin with the raw amino-acid sequence, 147 residues long: Allograft inflammatory factor 1 (147 aa).

The residue at position 2 (S2) is an N-acetylserine. At K11 the chain carries N6-acetyllysine. S39 is subject to Phosphoserine. Positions 45–80 (SKLEGFKEKYMEFDLNGNGDIDIMSLKRMLEKLGVP) constitute an EF-hand 1 domain. 6 residues coordinate Ca(2+): D58, N60, N62, D64, T100, and D105. Residues 81–115 (KTHLELKKLIGEVSSGSGETFSYPDFLRMMLGKRS) enclose the EF-hand 2; degenerate domain. Residues 128-147 (AREKEKPTGPPAKKAISELP) are disordered.

In terms of assembly, homodimer (Potential). Monomer. Interacts with LCP1. Phosphorylated on serine residues. In terms of tissue distribution, detected in T-lymphocytes and peripheral blood mononuclear cells.

The protein localises to the cytoplasm. It localises to the cytoskeleton. Its subcellular location is the cell projection. It is found in the ruffle membrane. The protein resides in the phagocytic cup. Its function is as follows. Actin-binding protein that enhances membrane ruffling and RAC activation. Enhances the actin-bundling activity of LCP1. Binds calcium. Plays a role in RAC signaling and in phagocytosis. May play a role in macrophage activation and function. Promotes the proliferation of vascular smooth muscle cells and of T-lymphocytes. Enhances lymphocyte migration. Plays a role in vascular inflammation. The chain is Allograft inflammatory factor 1 (AIF1) from Homo sapiens (Human).